The following is a 409-amino-acid chain: Regulator of Ty1 transposition protein 103 (409 aa).

Residues 1-135 (MPFSSEQFTT…DIERSLKTES (135 aa)) form the CID domain. Residues 250-409 (LNKNVDEDNI…IQDLLSKLAN (160 aa)) form a disordered region. The span at 266–289 (GDGDDDDDDGDNDDDDDDDDDDKN) shows a compositional bias: acidic residues. 3 stretches are compositionally biased toward basic and acidic residues: residues 307 to 323 (TDKK…EHKN), 337 to 363 (RTHD…KTSE), and 370 to 380 (EDGHYELDIEG).

Belongs to the UPF0400 (RTT103) family. As to quaternary structure, interacts with PCF11, RAI1, RAT1, RPO21 and RBP2.

It localises to the nucleus. Involved in transcription termination by RNA polymerase II and in regulation of Ty1 transposition. The polypeptide is Regulator of Ty1 transposition protein 103 (RTT103) (Saccharomyces cerevisiae (strain ATCC 204508 / S288c) (Baker's yeast)).